The chain runs to 546 residues: Membrane protein insertase YidC (546 aa).

A helical transmembrane segment spans residues 8–28 (ILLATVLSVGILILWQVIFPT). The segment at 31–70 (APPKPAHPPAAEVAKPAAPASPAPGAAAPAVPAPPPDAPE) is disordered. The segment covering 39 to 60 (PAAEVAKPAAPASPAPGAAAPA) has biased composition (low complexity). The next 5 helical transmembrane spans lie at 326–346 (IDYG…LYVM), 356–376 (WGVA…PLTY), 422–442 (LGGC…YAAL), 459–479 (LTAH…SFVM), and 498–518 (FFPG…TLYI).

This sequence belongs to the OXA1/ALB3/YidC family. Type 1 subfamily. In terms of assembly, interacts with the Sec translocase complex via SecD. Specifically interacts with transmembrane segments of nascent integral membrane proteins during membrane integration.

It localises to the cell inner membrane. Required for the insertion and/or proper folding and/or complex formation of integral membrane proteins into the membrane. Involved in integration of membrane proteins that insert both dependently and independently of the Sec translocase complex, as well as at least some lipoproteins. Aids folding of multispanning membrane proteins. The chain is Membrane protein insertase YidC from Anaeromyxobacter dehalogenans (strain 2CP-1 / ATCC BAA-258).